The following is a 541-amino-acid chain: uncharacterized protein (541 aa).

The next 12 membrane-spanning stretches (helical) occupy residues Trp-99 to Tyr-119, Gly-131 to Leu-153, Phe-165 to Ala-185, Asn-187 to Ser-207, Tyr-224 to Gly-244, Trp-256 to Met-276, Leu-325 to Ile-345, Ile-367 to Ile-387, Leu-409 to Thr-429, Trp-439 to Val-459, Ala-472 to Gly-494, and Ser-508 to Gly-528.

The protein belongs to the major facilitator superfamily. CAR1 family.

The protein localises to the membrane. This is an uncharacterized protein from Schizosaccharomyces pombe (strain 972 / ATCC 24843) (Fission yeast).